Here is a 449-residue protein sequence, read N- to C-terminus: Bifunctional protein GlmU (449 aa).

Positions 1-226 are pyrophosphorylase; it reads MVAVAILAAG…FQEISGINDR (226 aa). UDP-N-acetyl-alpha-D-glucosamine-binding positions include 7–10, Lys21, Gln73, and 78–79; these read LAAG and GT. Position 103 (Asp103) interacts with Mg(2+). Residues Gly140, Glu155, Asn170, and Asn224 each contribute to the UDP-N-acetyl-alpha-D-glucosamine site. Asn224 contributes to the Mg(2+) binding site. The interval 227-247 is linker; it reads FQLSAAYEILQDRIKEKWMKA. The N-acetyltransferase stretch occupies residues 248-449; that stretch reads GVMIHQPDTV…KEIKGWRLQS (202 aa). 2 residues coordinate UDP-N-acetyl-alpha-D-glucosamine: Arg329 and Lys347. His359 functions as the Proton acceptor in the catalytic mechanism. Residues Tyr362 and Asn373 each contribute to the UDP-N-acetyl-alpha-D-glucosamine site. Acetyl-CoA is bound by residues Ala376, 382–383, Ala419, and Arg436; that span reads NY.

It in the N-terminal section; belongs to the N-acetylglucosamine-1-phosphate uridyltransferase family. This sequence in the C-terminal section; belongs to the transferase hexapeptide repeat family. As to quaternary structure, homotrimer. Mg(2+) is required as a cofactor.

The protein localises to the cytoplasm. The catalysed reaction is alpha-D-glucosamine 1-phosphate + acetyl-CoA = N-acetyl-alpha-D-glucosamine 1-phosphate + CoA + H(+). It carries out the reaction N-acetyl-alpha-D-glucosamine 1-phosphate + UTP + H(+) = UDP-N-acetyl-alpha-D-glucosamine + diphosphate. The protein operates within nucleotide-sugar biosynthesis; UDP-N-acetyl-alpha-D-glucosamine biosynthesis; N-acetyl-alpha-D-glucosamine 1-phosphate from alpha-D-glucosamine 6-phosphate (route II): step 2/2. Its pathway is nucleotide-sugar biosynthesis; UDP-N-acetyl-alpha-D-glucosamine biosynthesis; UDP-N-acetyl-alpha-D-glucosamine from N-acetyl-alpha-D-glucosamine 1-phosphate: step 1/1. It functions in the pathway bacterial outer membrane biogenesis; LPS lipid A biosynthesis. In terms of biological role, catalyzes the last two sequential reactions in the de novo biosynthetic pathway for UDP-N-acetylglucosamine (UDP-GlcNAc). The C-terminal domain catalyzes the transfer of acetyl group from acetyl coenzyme A to glucosamine-1-phosphate (GlcN-1-P) to produce N-acetylglucosamine-1-phosphate (GlcNAc-1-P), which is converted into UDP-GlcNAc by the transfer of uridine 5-monophosphate (from uridine 5-triphosphate), a reaction catalyzed by the N-terminal domain. This is Bifunctional protein GlmU from Picosynechococcus sp. (strain ATCC 27264 / PCC 7002 / PR-6) (Agmenellum quadruplicatum).